The chain runs to 671 residues: MPTASASESSSNQPESSNASGSIDHVLVEDRLFHPSAEFTSKAVISTEEQYEKLATAARENPDEFWRAEALEHLHWFEPFGTVCDWQPPHAKWFVNGKTNACYNSVDAHVAAGRGDRTAIIWEGEPVEDGQPRDQRTLTYAELQTEVAKCAEGLTQLGIGVGDVVSIYMPMTPELAVAMLACARIGAIHSVIFAGFSAESIAERNNDASAKLVITSDGLYRRGKVLPLKATVDEALEKSPTVEKCLVLRRTGDDAPMQEGRDVWWHDVVENQPGEMAAKPLDSETPLFILYTSGSTGKPKGILHTTAGYNLWAKRTFEWVFDHREGDVYWCTADCGWITGHSYVVYGPLSAGATCLMYEGAPNFPAEDRFWDIVERHKVSILYTAPTAVRAFIKWGDEHVDKHDLSSLRLLGSVGEGINPEAWMWYHKKIGGEKCPIVDTWWQTETGGIMMSPLPGITPTKPGSCTRPLPGVVPSIVDELGNSVDSEHGGKLCISQPWPGMLRGIYGDEERFVEQYWSDVPDKYLTGDNARCDTDGYYWIMGRIDDVINVSGHRLSTIEVESALVSHPDVCEAAVVGRPHDLKGQAIAAFVTSNDRGHDDEFRNELKQHVRKQIGALAQPDDIRFTAALPKTRSGKIMRRLLRDVAAGRELVGDTSTLEDLSSLAKLREED.

The interval 1-21 is disordered; it reads MPTASASESSSNQPESSNASG. Residues 221–224, Thr339, and Asn363 each bind CoA; that span reads RRGK. ATP contacts are provided by residues 415-417, 439-444, Asp528, and Arg543; these read GEG and DTWWQT. Ser551 is a CoA binding site. Arg554 lines the ATP pocket. Mg(2+)-binding residues include Val565, His567, and Val570. Arg611 contacts CoA. Lys636 carries the post-translational modification N6-acetyllysine.

It belongs to the ATP-dependent AMP-binding enzyme family. Requires Mg(2+) as cofactor. In terms of processing, acetylated. Deacetylation by the SIR2-homolog deacetylase activates the enzyme.

The catalysed reaction is acetate + ATP + CoA = acetyl-CoA + AMP + diphosphate. Its function is as follows. Catalyzes the conversion of acetate into acetyl-CoA (AcCoA), an essential intermediate at the junction of anabolic and catabolic pathways. AcsA undergoes a two-step reaction. In the first half reaction, AcsA combines acetate with ATP to form acetyl-adenylate (AcAMP) intermediate. In the second half reaction, it can then transfer the acetyl group from AcAMP to the sulfhydryl group of CoA, forming the product AcCoA. The protein is Acetyl-coenzyme A synthetase of Rhodopirellula baltica (strain DSM 10527 / NCIMB 13988 / SH1).